Reading from the N-terminus, the 179-residue chain is Warthog protein 3 (179 aa).

Residues 1–19 form the signal peptide; sequence MLYHVEMFTIILLFGFSLA. N52 and N147 each carry an N-linked (GlcNAc...) asparagine glycan.

Expressed in the trinucleate pharyngeal gland cell g1, seam cells and hypodermis.

It localises to the secreted. Its function is as follows. Intercellular signal essential for a variety of patterning events during development. The sequence is that of Warthog protein 3 (wrt-3) from Caenorhabditis elegans.